The sequence spans 269 residues: MLPYPQIDPVAVALGPLKIHWYGLMYLIGIGGAWLLASRRLNRFDPTWSREKLSDLVFWLSMGVIVGGRLGYVLFYDLHQYLANPTLIFEVWKGGMSFHGGFIGVMLAALWFGKRNNKSFFELMDFVAPLVPIGLGAGRIGNFINAELWGKATDVPWAMVFPPFSDPAQLPRHPSQLYQFALEGVALFVILWLYSRKPRPTMAVSGMFALFYGIFRFIVEFVRVPDAQLGYIAFGWLTMGQLLCVPMIVGGIFLIWLAYNRKPTAKATV.

7 consecutive transmembrane segments (helical) span residues 17–37, 56–76, 92–112, 120–140, 174–194, 202–222, and 237–257; these read LKIH…WLLA, LVFW…VLFY, WKGG…ALWF, FFEL…AGRI, PSQL…LWLY, MAVS…VEFV, and LTMG…LIWL. Arginine 139 is an a 1,2-diacyl-sn-glycero-3-phospho-(1'-sn-glycerol) binding site.

It belongs to the Lgt family.

It is found in the cell inner membrane. It catalyses the reaction L-cysteinyl-[prolipoprotein] + a 1,2-diacyl-sn-glycero-3-phospho-(1'-sn-glycerol) = an S-1,2-diacyl-sn-glyceryl-L-cysteinyl-[prolipoprotein] + sn-glycerol 1-phosphate + H(+). It functions in the pathway protein modification; lipoprotein biosynthesis (diacylglyceryl transfer). Its function is as follows. Catalyzes the transfer of the diacylglyceryl group from phosphatidylglycerol to the sulfhydryl group of the N-terminal cysteine of a prolipoprotein, the first step in the formation of mature lipoproteins. This chain is Phosphatidylglycerol--prolipoprotein diacylglyceryl transferase, found in Pseudomonas entomophila (strain L48).